The chain runs to 235 residues: Small ribosomal subunit protein eS4 (235 aa).

The region spanning 37–100 (LPLGIIIRDI…NEAYRMLQDE (64 aa)) is the S4 RNA-binding domain.

Belongs to the eukaryotic ribosomal protein eS4 family.

This Methanosarcina acetivorans (strain ATCC 35395 / DSM 2834 / JCM 12185 / C2A) protein is Small ribosomal subunit protein eS4.